Reading from the N-terminus, the 72-residue chain is MRRLVLLLAISLLLYQDLPVRSEFELDRICGYGTARCRKKCRSQEYRIGRCPNTYACCLRKWDESLLNRTKP.

Residues 1-22 form the signal peptide; that stretch reads MRRLVLLLAISLLLYQDLPVRS. 3 disulfides stabilise this stretch: cysteine 30-cysteine 57, cysteine 37-cysteine 51, and cysteine 41-cysteine 58.

The protein belongs to the beta-defensin family.

It is found in the secreted. Functionally, has antimicrobial activity. The polypeptide is Beta-defensin 104A (DEFB104A) (Pongo pygmaeus (Bornean orangutan)).